The sequence spans 803 residues: Carbon monoxide dehydrogenase large chain (803 aa).

Residue Arg-384 is modified to 4-hydroxyarginine. Cys-385 lines the Cu(+) pocket. Glu-757 serves as a coordination point for Mo-molybdopterin cytosine dinucleotide.

Dimer of heterotrimers. Each heterotrimer consists of a large, a medium and a small subunit. Cu(+) serves as cofactor. It depends on Mo-molybdopterin cytosine dinucleotide as a cofactor.

It carries out the reaction CO + a quinone + H2O = a quinol + CO2. In terms of biological role, catalyzes the oxidation of carbon monoxide to carbon dioxide. The chain is Carbon monoxide dehydrogenase large chain (cutL) from Hydrogenophaga pseudoflava (Pseudomonas carboxydoflava).